A 42-amino-acid chain; its full sequence is Hemoglobin subunit beta-A (42 aa).

The 41-residue stretch at 2–42 folds into the Globin domain; it reads EWTDAERSAILSLWGKIDTDELGPALLARLXLVXXXTQRYF.

It belongs to the globin family. As to quaternary structure, heterotetramer of two alpha chains and two beta chains. Red blood cells.

In terms of biological role, involved in oxygen transport from gills to the various peripheral tissues. The chain is Hemoglobin subunit beta-A from Catostomus clarkii (Desert sucker).